Here is a 262-residue protein sequence, read N- to C-terminus: Small ribosomal subunit protein eS1y (262 aa).

The span at 1–18 (MAVGKNKRISKGRKGGKK) shows a compositional bias: basic residues. The disordered stretch occupies residues 1–21 (MAVGKNKRISKGRKGGKKKAV).

It belongs to the eukaryotic ribosomal protein eS1 family. As to quaternary structure, component of the small ribosomal subunit. Mature ribosomes consist of a small (40S) and a large (60S) subunit. The 40S subunit contains about 33 different proteins and 1 molecule of RNA (18S). The 60S subunit contains about 49 different proteins and 3 molecules of RNA (25S, 5.8S and 5S).

It localises to the cytoplasm. The chain is Small ribosomal subunit protein eS1y from Arabidopsis thaliana (Mouse-ear cress).